Here is a 93-residue protein sequence, read N- to C-terminus: Alpha-defensin 23 (93 aa).

An N-terminal signal peptide occupies residues 1–19 (MKTLVLLSALILLAFQVQA). Positions 20–58 (DPIQNTDEETKTEEQPGKEDQAVSVSFGDPEGSSLQEES) are excised as a propeptide. Positions 24–54 (NTDEETKTEEQPGKEDQAVSVSFGDPEGSSL) are disordered. A compositionally biased stretch (basic and acidic residues) spans 27–40 (EETKTEEQPGKEDQ). Disulfide bonds link C64–C92, C66–C81, and C71–C91.

This sequence belongs to the alpha-defensin family.

It is found in the secreted. May have microbicidal activities. In Mus musculus (Mouse), this protein is Alpha-defensin 23 (Defa23).